The chain runs to 664 residues: Serine/threonine-protein kinase PknD (664 aa).

Residues 1-381 (MSDAVPQVGS…PAGNKRKVWA (381 aa)) lie on the Cytoplasmic side of the membrane. The region spanning 15 to 276 (YQLLRLLGRG…DLAIAAHDAL (262 aa)) is the Protein kinase domain. ATP-binding positions include 21–29 (LGRGGMGEV) and Lys-44. Thr-135 is modified (phosphothreonine; by autocatalysis). Asp-138 functions as the Proton acceptor in the catalytic mechanism. Phosphothreonine; by autocatalysis occurs at positions 169, 171, 173, and 209. Residues 303–333 (TGLSQSESGIAGAGTGPPTPGAARWSPGDSA) form a disordered region. A helical transmembrane segment spans residues 382 to 402 (VVGAAAIVLVAIVAAAGYLVL). Topologically, residues 403–664 (RPSWSPTQAS…GNDRVVKLTS (262 aa)) are extracellular. 6 NHL repeats span residues 414–456 (QTVL…LATG), 457–497 (STGT…LAAG), 498–539 (SNNQ…LAAG), 540–581 (SKTQ…LEAE), 582–623 (SNNQ…LLAG), and 624–664 (STTS…KLTS).

This sequence belongs to the protein kinase superfamily. Ser/Thr protein kinase family. Homodimer. The extracellular domain interacts with host laminin. Post-translationally, autophosphorylated. Dephosphorylated by PstP.

The protein localises to the cell membrane. The enzyme catalyses L-seryl-[protein] + ATP = O-phospho-L-seryl-[protein] + ADP + H(+). It carries out the reaction L-threonyl-[protein] + ATP = O-phospho-L-threonyl-[protein] + ADP + H(+). Dimerization activates the kinase domain of unphosphorylated PknD via an allosteric mechanism, triggering autophosphorylation and phosphorylation of target proteins. Phosphorylated PknD is fully active even in the absence of dimerization. Its function is as follows. Part of a signaling pathway that enables adaptation to osmotic stress through cell wall remodeling and virulence factor production. Functionally, key microbial factor required for central nervous system tuberculosis. Required for invasion of host brain endothelia, but not macrophages, lung epithelia or other endothelia. This Mycobacterium tuberculosis (strain CDC 1551 / Oshkosh) protein is Serine/threonine-protein kinase PknD (pknD).